We begin with the raw amino-acid sequence, 912 residues long: Transcription factor bHLH140 (912 aa).

The tract at residues 1–57 (MDDFNLRSENPNSSSTTSSSSSSFHRHKSETGNTKRSRSTSTLSTDPQSVAARDRRH) is disordered. Residues 13–23 (SSSTTSSSSSS) are compositionally biased toward low complexity. Residues 43–92 (LSTDPQSVAARDRRHRISDRFKILQSMVPGGAKMDTVSMLDEAISYVKFL) enclose the bHLH domain. 234 to 241 (GPPGSGKS) is an ATP binding site. Residues 511–690 (KAKASQKNID…KYKGSQDKAV (180 aa)) enclose the Macro domain. A compositionally biased stretch (polar residues) spans 657 to 666 (PKRSSQTAVS). The disordered stretch occupies residues 657–706 (PKRSSQTAVSDSGEDIKEDSERNKKYKGSQDKAVTNNLESESLEDTRGSG). Residues 720 to 829 (LHSIAMHPER…SQDFNSDSLK (110 aa)) enclose the HIT domain. A C2H2-type zinc finger spans residues 870–893 (LRCNRCRSAHPNIPKLKSHVRSCH).

In terms of assembly, homodimer.

The protein localises to the nucleus. The sequence is that of Transcription factor bHLH140 (BHLH140) from Arabidopsis thaliana (Mouse-ear cress).